We begin with the raw amino-acid sequence, 432 residues long: Glutamate-1-semialdehyde 2,1-aminomutase (432 aa).

An N6-(pyridoxal phosphate)lysine modification is found at lysine 272.

This sequence belongs to the class-III pyridoxal-phosphate-dependent aminotransferase family. HemL subfamily. As to quaternary structure, homodimer. It depends on pyridoxal 5'-phosphate as a cofactor.

It is found in the cytoplasm. It carries out the reaction (S)-4-amino-5-oxopentanoate = 5-aminolevulinate. It functions in the pathway porphyrin-containing compound metabolism; protoporphyrin-IX biosynthesis; 5-aminolevulinate from L-glutamyl-tRNA(Glu): step 2/2. The protein operates within porphyrin-containing compound metabolism; chlorophyll biosynthesis. The protein is Glutamate-1-semialdehyde 2,1-aminomutase of Trichormus variabilis (strain ATCC 29413 / PCC 7937) (Anabaena variabilis).